The chain runs to 517 residues: Serine hydroxymethyltransferase 1, mitochondrial (517 aa).

A mitochondrion-targeting transit peptide spans 1–31 (MAMALALRRLSSSADKPLQRLFNGGHLYSMS). Lys287 is modified (N6-(pyridoxal phosphate)lysine).

This sequence belongs to the SHMT family. As to quaternary structure, homotetramer. The cofactor is pyridoxal 5'-phosphate.

Its subcellular location is the mitochondrion. It catalyses the reaction (6R)-5,10-methylene-5,6,7,8-tetrahydrofolate + glycine + H2O = (6S)-5,6,7,8-tetrahydrofolate + L-serine. The protein operates within one-carbon metabolism; tetrahydrofolate interconversion. Its function is as follows. Catalyzes the interconversion of serine and glycine. In Flaveria pringlei, this protein is Serine hydroxymethyltransferase 1, mitochondrial.